Consider the following 294-residue polypeptide: Agamous-like MADS-box protein AGL82 (294 aa).

The MADS-box domain occupies 1–51 (MVPKVVDLQRIANDKTRITTYKKRKASLYKKAQEFSTLCGVETCLIVYGPT).

Interacts with MEE14/CBP1.

Its subcellular location is the nucleus. Its function is as follows. Probable transcription factor that may function in the maintenance of the proper function of the central cell in pollen tube attraction. In Arabidopsis thaliana (Mouse-ear cress), this protein is Agamous-like MADS-box protein AGL82.